Here is a 172-residue protein sequence, read N- to C-terminus: Inorganic pyrophosphatase (172 aa).

Substrate contacts are provided by K29, R43, and Y55. Mg(2+) is bound by residues D65, D70, and D102. Y141 contacts substrate.

This sequence belongs to the PPase family. As to quaternary structure, homohexamer. Requires Mg(2+) as cofactor.

Its subcellular location is the cytoplasm. The catalysed reaction is diphosphate + H2O = 2 phosphate + H(+). Its function is as follows. Catalyzes the hydrolysis of inorganic pyrophosphate (PPi) forming two phosphate ions. The protein is Inorganic pyrophosphatase of Rickettsia prowazekii (strain Madrid E).